A 583-amino-acid polypeptide reads, in one-letter code: Ras-specific guanine nucleotide-releasing factor RalGPS2 (583 aa).

A Ras-GEF domain is found at 49 to 287 (TPEEYAGQIT…YKLSLKIEPG (239 aa)). The interval 283–314 (KIEPGTSTPRSAASREDLVGPEVGASPQSGRK) is disordered. A phosphoserine mark is found at Ser-293, Ser-296, Ser-308, and Ser-311. A PXXP motif is present at residues 324–327 (PQTP). Thr-326 carries the phosphothreonine modification. Phosphoserine occurs at positions 329 and 343. Thr-361 carries the phosphothreonine modification. A disordered region spans residues 372–406 (DDSVMEPHAPSRGQAESSTLSSGISIGSSDGSELS). Ser-374 carries the phosphoserine modification. Positions 387–403 (ESSTLSSGISIGSSDGS) are enriched in low complexity. Ser-422 carries the phosphoserine modification. A PH domain is found at 457–569 (AVTIQGVLRR…WFKHLSAACQ (113 aa)). The required for stimulation of nucleotide exchange by RALA stretch occupies residues 459 to 583 (TIQGVLRRKT…QVPTNLMTFE (125 aa)).

In terms of assembly, interacts with the SH3 domains of GRB2 and PLCG1. Interacts with RALA.

It localises to the cytoplasm. The protein resides in the cell membrane. Functionally, guanine nucleotide exchange factor for the small GTPase RALA. May be involved in cytoskeletal organization. May also be involved in the stimulation of transcription in a Ras-independent fashion. The chain is Ras-specific guanine nucleotide-releasing factor RalGPS2 (RALGPS2) from Homo sapiens (Human).